The primary structure comprises 71 residues: Protein SlyX homolog (71 aa).

The tract at residues 49 to 71 (KIKESQSSSSMMSNEPEPPPPHY) is disordered.

The protein belongs to the SlyX family.

This chain is Protein SlyX homolog, found in Pseudoalteromonas translucida (strain TAC 125).